Here is a 64-residue protein sequence, read N- to C-terminus: Large ribosomal subunit protein bL35 (64 aa).

Positions 1 to 24 (MPKMKSHRGACKRFKKTASGKVKR) are enriched in basic residues. The disordered stretch occupies residues 1-64 (MPKMKSHRGA…EKQIKRMILA (64 aa)). Over residues 25–35 (ERMYGSHNLEK) the composition is skewed to basic and acidic residues. A compositionally biased stretch (basic residues) spans 36-45 (KNRKRTRRLH).

The protein belongs to the bacterial ribosomal protein bL35 family.

This chain is Large ribosomal subunit protein bL35, found in Prosthecochloris aestuarii (strain DSM 271 / SK 413).